An 807-amino-acid polypeptide reads, in one-letter code: Tyrosine-protein phosphatase non-receptor type 22 (807 aa).

Residues 24–289 form the Tyrosine-protein phosphatase domain; it reads FANEFLKLKR…ELVYNAVLEL (266 aa). Ser-35 is subject to Phosphoserine; by PKC/PRKCD. Cysteines 129 and 227 form a disulfide. Cys-227 serves as the catalytic Phosphocysteine intermediate. Substrate is bound by residues 227–233 and Gln-274; that span reads CSAGCGR. Ser-449, Ser-635, Ser-684, and Ser-692 each carry phosphoserine. Disordered stretches follow at residues 676–700 and 724–746; these read SVKL…LPER and SYPD…GKSF.

The protein belongs to the protein-tyrosine phosphatase family. Non-receptor class 4 subfamily. Interacts with CSK. Interacts with LPXN. Interacts with CBL. Interacts with TRAF3 (via MATH domain); the interaction promotes TRAF3 polyubiquitination. Post-translationally, phosphorylation on Ser-35 by PKC/PRKCD abrogates its ability to dephosphorylate and inactivate the SRC family kinases. As to expression, expressed in bone marrow, B and T-cells, PBMCs, natural killer cells, monocytes, dendritic cells and neutrophils. Both isoform 1 and 4 are predominantly expressed in lymphoid tissues and cells. Isoform 1 is expressed in thymocytes and both mature B and T-cells.

Its subcellular location is the cytoplasm. The catalysed reaction is O-phospho-L-tyrosyl-[protein] + H2O = L-tyrosyl-[protein] + phosphate. It carries out the reaction N-(5Z,8Z,11Z,14Z-eicosatetraenoyl)-ethanolamine phosphate + H2O = N-(5Z,8Z,11Z,14Z-eicosatetraenoyl)-ethanolamine + phosphate. Down-regulated by phosphorylation. In terms of biological role, acts as a negative regulator of T-cell receptor (TCR) signaling by direct dephosphorylation of the Src family kinases LCK and FYN, ITAMs of the TCRz/CD3 complex, as well as ZAP70, VAV, VCP and other key signaling molecules. Associates with and probably dephosphorylates CBL. Dephosphorylates LCK at its activating 'Tyr-394' residue. Dephosphorylates ZAP70 at its activating 'Tyr-493' residue. Dephosphorylates the immune system activator SKAP2. Positively regulates toll-like receptor (TLR)-induced type 1 interferon production. Promotes host antiviral responses mediated by type 1 interferon. Regulates NOD2-induced pro-inflammatory cytokine secretion and autophagy. Acts as an activator of NLRP3 inflammasome assembly by mediating dephosphorylation of 'Tyr-861' of NLRP3. Dephosphorylates phospho-anandamide (p-AEA), an endocannabinoid to anandamide (also called N-arachidonoylethanolamide). The protein is Tyrosine-protein phosphatase non-receptor type 22 (PTPN22) of Homo sapiens (Human).